The chain runs to 517 residues: Crotonobetaine/carnitine--CoA ligase (517 aa).

It belongs to the ATP-dependent AMP-binding enzyme family.

It catalyses the reaction 4-(trimethylamino)butanoate + ATP + CoA = 4-(trimethylamino)butanoyl-CoA + AMP + diphosphate. It carries out the reaction crotonobetaine + ATP + CoA = crotonobetainyl-CoA + AMP + diphosphate. The enzyme catalyses (R)-carnitine + ATP + CoA = (R)-carnitinyl-CoA + AMP + diphosphate. It functions in the pathway amine and polyamine metabolism; carnitine metabolism. Catalyzes the transfer of CoA to carnitine, generating the initial carnitinyl-CoA needed for the CaiB reaction cycle. Also has activity toward crotonobetaine and gamma-butyrobetaine. This Escherichia coli O127:H6 (strain E2348/69 / EPEC) protein is Crotonobetaine/carnitine--CoA ligase.